A 273-amino-acid polypeptide reads, in one-letter code: 4-hydroxy-tetrahydrodipicolinate reductase (273 aa).

NAD(+)-binding positions include 12–17 (GAGGRM) and Glu-38. An NADP(+)-binding site is contributed by Arg-39. Residues 102 to 104 (GTT) and 126 to 129 (AANF) contribute to the NAD(+) site. Residue His-159 is the Proton donor/acceptor of the active site. His-160 lines the (S)-2,3,4,5-tetrahydrodipicolinate pocket. Lys-163 (proton donor) is an active-site residue. A (S)-2,3,4,5-tetrahydrodipicolinate-binding site is contributed by 169 to 170 (GT).

The protein belongs to the DapB family. As to quaternary structure, homotetramer.

The protein resides in the cytoplasm. The catalysed reaction is (S)-2,3,4,5-tetrahydrodipicolinate + NAD(+) + H2O = (2S,4S)-4-hydroxy-2,3,4,5-tetrahydrodipicolinate + NADH + H(+). The enzyme catalyses (S)-2,3,4,5-tetrahydrodipicolinate + NADP(+) + H2O = (2S,4S)-4-hydroxy-2,3,4,5-tetrahydrodipicolinate + NADPH + H(+). It participates in amino-acid biosynthesis; L-lysine biosynthesis via DAP pathway; (S)-tetrahydrodipicolinate from L-aspartate: step 4/4. Its function is as follows. Catalyzes the conversion of 4-hydroxy-tetrahydrodipicolinate (HTPA) to tetrahydrodipicolinate. The polypeptide is 4-hydroxy-tetrahydrodipicolinate reductase (Salmonella gallinarum (strain 287/91 / NCTC 13346)).